A 178-amino-acid polypeptide reads, in one-letter code: Large ribosomal subunit protein bL25 (178 aa).

The protein belongs to the bacterial ribosomal protein bL25 family. CTC subfamily. In terms of assembly, part of the 50S ribosomal subunit; part of the 5S rRNA/L5/L18/L25 subcomplex. Contacts the 5S rRNA. Binds to the 5S rRNA independently of L5 and L18.

Functionally, this is one of the proteins that binds to the 5S RNA in the ribosome where it forms part of the central protuberance. The chain is Large ribosomal subunit protein bL25 from Helicobacter pylori (strain HPAG1).